The sequence spans 215 residues: Adenylate kinase (215 aa).

Residue 10–15 (GAGKGT) coordinates ATP. The segment at 30–60 (STGDMLRAAIIKAGTEMGKQAKSVIDAGQLV) is NMP. AMP-binding positions include Thr-31, Arg-36, 58–60 (QLV), 86–89 (GFPR), and Gln-93. Residues 123–160 (GRRAHLPSGRTYHVTFNPSKVEGQDDVTGEPLVIREDD) form an LID region. ATP-binding positions include Arg-124 and 133–134 (TY). The AMP site is built by Arg-157 and Arg-168. An ATP-binding site is contributed by Lys-201.

The protein belongs to the adenylate kinase family. As to quaternary structure, monomer.

It localises to the cytoplasm. The catalysed reaction is AMP + ATP = 2 ADP. It functions in the pathway purine metabolism; AMP biosynthesis via salvage pathway; AMP from ADP: step 1/1. Its function is as follows. Catalyzes the reversible transfer of the terminal phosphate group between ATP and AMP. Plays an important role in cellular energy homeostasis and in adenine nucleotide metabolism. The polypeptide is Adenylate kinase (Aliivibrio salmonicida (strain LFI1238) (Vibrio salmonicida (strain LFI1238))).